The primary structure comprises 348 residues: 2-methyl-6-phytyl-1,4-hydroquinone methyltransferase 2, chloroplastic (348 aa).

Residues 1–48 form a disordered region; that stretch reads MAMASSAYAPAGGVGTHSAPGRIRPPRGLGFSTTTTKSRPLVLTRRGG. The transit peptide at 1-59 directs the protein to the chloroplast; that stretch reads MAMASSAYAPAGGVGTHSAPGRIRPPRGLGFSTTTTKSRPLVLTRRGGGGGNISVARLR. Topologically, residues 60-317 are chloroplast intermembrane; sequence CAASSSSAAA…PVNPITFLFR (258 aa). The segment at 125-134 is SAM motif I; the sequence is VVDVGGGTGF. Residues 170-183 are SAM motif II; that stretch reads VTIMEGDAEDLPFP. Positions 211-224 are SAM motif III; it reads RVLRLGGVACMIGP. The helical transmembrane segment at 318–338 threads the bilayer; the sequence is FLMGTICAAYYVLVPIYMWIK. Residues 339–348 are Stromal-facing; the sequence is DQIVPKGMPI.

The protein belongs to the class I-like SAM-binding methyltransferase superfamily. MPBQ/MBSQ MT family.

It localises to the plastid. It is found in the chloroplast inner membrane. The catalysed reaction is 2-methyl-6-phytyl-1,4-benzene-1,4-diol + S-adenosyl-L-methionine = 2,3-dimethyl-6-phytylbenzene-1,4-diol + S-adenosyl-L-homocysteine + H(+). It carries out the reaction 2-methyl-6-(all-trans-nonaprenyl)benzene-1,4-diol + S-adenosyl-L-methionine = plastoquinol-9 + S-adenosyl-L-homocysteine + H(+). It catalyses the reaction 6-geranylgeranyl-2-methylbenzene-1,4-diol + S-adenosyl-L-methionine = 6-geranylgeranyl-2,3-dimethylbenzene-1,4-diol + S-adenosyl-L-homocysteine + H(+). It functions in the pathway cofactor biosynthesis; tocopherol biosynthesis. Involved in a key methylation step in both tocopherols (vitamin E) and plastoquinone synthesis. Catalyzes the conversion of 2-methyl-6-phytyl-1,4-hydroquinone (MPBQ) to 2,3-dimethyl-6-phytyl-1,4-hydroquinone (DMPQ, a substrate for tocopherol cyclase), and 2-methyl-6-solanyl-1,4-benzoquinone (MSBQ) to plastoquinone. This is 2-methyl-6-phytyl-1,4-hydroquinone methyltransferase 2, chloroplastic from Oryza sativa subsp. japonica (Rice).